Consider the following 602-residue polypeptide: ATP-dependent zinc metalloprotease FtsH 3 (602 aa).

At 1-18 (MNSWFLQVSKRLGPAGRR) the chain is on the cytoplasmic side. A helical membrane pass occupies residues 19–39 (LWLLGFMGVVLAVTLGLALRA). Over 40-117 (ARESATQRTA…DFASREDPSR (78 aa)) the chain is Periplasmic. The chain crosses the membrane as a helical span at residues 118–138 (AASAVLPVVVLAAVGFALFTV). The Cytoplasmic portion of the chain corresponds to 139-602 (SRRRSPKVFS…RRPRPEDQAA (464 aa)). 202-209 (GEPGTGKT) lines the ATP pocket. Histidine 425 is a binding site for Zn(2+). The active site involves glutamate 426. Zn(2+) is bound by residues histidine 429 and aspartate 501.

It in the central section; belongs to the AAA ATPase family. This sequence in the C-terminal section; belongs to the peptidase M41 family. As to quaternary structure, homohexamer. It depends on Zn(2+) as a cofactor.

Its subcellular location is the cell inner membrane. Acts as a processive, ATP-dependent zinc metallopeptidase for both cytoplasmic and membrane proteins. Plays a role in the quality control of integral membrane proteins. This chain is ATP-dependent zinc metalloprotease FtsH 3, found in Sorangium cellulosum (strain So ce56) (Polyangium cellulosum (strain So ce56)).